A 223-amino-acid chain; its full sequence is Ras-related protein Rab-37 (223 aa).

Low complexity predominate over residues 1–13; it reads MTGTPGAATAGDG. A disordered region spans residues 1-22; sequence MTGTPGAATAGDGEAPERSPPF. Threonine 2 carries the N-acetylthreonine modification. 8 residues coordinate GTP: serine 38, glycine 39, valine 40, glycine 41, lysine 42, threonine 43, cysteine 44, and threonine 62. Threonine 43 provides a ligand contact to Mg(2+). 2 short sequence motifs (switch) span residues 52-67 and 85-102; these read GAFL…GIDS and DTAG…YYRD. Threonine 62 and aspartate 85 together coordinate Mg(2+). The GTP site is built by glycine 88, asparagine 143, lysine 144, aspartate 146, serine 173, alanine 174, and lysine 175. S-geranylgeranyl cysteine attachment occurs at residues cysteine 219 and cysteine 220. The residue at position 220 (cysteine 220) is a Cysteine methyl ester. The propeptide at 221–223 is removed in mature form; it reads SFV.

It belongs to the small GTPase superfamily. Rab family. In terms of assembly, interacts with RIMS1. Interacts (in GDP-bound form) with RPGR, RPGR functions as guanine exchange factor (GEF). The cofactor is Mg(2+). Expressed in the retina (at protein level). Specifically expressed in the bone marrow mast cells.

It is found in the cytoplasmic vesicle. It localises to the cell projection. The protein resides in the cilium. It catalyses the reaction GTP + H2O = GDP + phosphate + H(+). Regulated by guanine nucleotide exchange factors (GEFs) including RPGR which promote the exchange of bound GDP for free GTP. Regulated by GTPase activating proteins (GAPs) which increase the GTP hydrolysis activity. Inhibited by GDP dissociation inhibitors (GDIs). The small GTPases Rab are key regulators of intracellular membrane trafficking, from the formation of transport vesicles to their fusion with membranes. Rabs cycle between an inactive GDP-bound form and an active GTP-bound form that is able to recruit to membranes different sets of downstream effectors directly responsible for vesicle formation, movement, tethering and fusion. Acts as an organizer for autophagosome biogenesis in a GTP-dependent manner. Involved in retinal homeostasis by autophagy regulation. This Mus musculus (Mouse) protein is Ras-related protein Rab-37.